A 358-amino-acid polypeptide reads, in one-letter code: Plastoglobulin-1, chloroplastic (358 aa).

Residues 1-47 (MALLSSTLRAPLVFSKNPKPVSLSSLHSRIYLSPRSPRFPSLRFISA) constitute a chloroplast transit peptide. The disordered stretch occupies residues 48–114 (AGDTGDAEKP…NDAGNGTPTF (67 aa)).

The protein belongs to the PAP/fibrillin family.

Its subcellular location is the plastid. It localises to the chloroplast. In terms of biological role, may form together with other plastoglobulins a coat on the surface of the lipoprotein particle. The coat may contain receptors for attachment to the thylakoid membrane as well as regulatory proteins that may function in the transfer of lipids to and from the thylakoid membranes. This chain is Plastoglobulin-1, chloroplastic (PG1), found in Pisum sativum (Garden pea).